A 137-amino-acid chain; its full sequence is uncharacterized protein (137 aa).

Positions 1 to 19 are cleaved as a signal peptide; sequence MVAFYGIFLFGTVYLFGLA.

This is an uncharacterized protein from Acanthamoeba polyphaga (Amoeba).